The sequence spans 423 residues: Glucose-1-phosphate adenylyltransferase 1 (423 aa).

Alpha-D-glucose 1-phosphate is bound by residues Tyr-111, Gly-176, 191 to 192 (EK), and Ser-209.

This sequence belongs to the bacterial/plant glucose-1-phosphate adenylyltransferase family. In terms of assembly, homotetramer.

It carries out the reaction alpha-D-glucose 1-phosphate + ATP + H(+) = ADP-alpha-D-glucose + diphosphate. It participates in glycan biosynthesis; glycogen biosynthesis. Involved in the biosynthesis of ADP-glucose, a building block required for the elongation reactions to produce glycogen. Catalyzes the reaction between ATP and alpha-D-glucose 1-phosphate (G1P) to produce pyrophosphate and ADP-Glc. The chain is Glucose-1-phosphate adenylyltransferase 1 from Alkalilimnicola ehrlichii (strain ATCC BAA-1101 / DSM 17681 / MLHE-1).